Consider the following 1143-residue polypeptide: Disease resistance protein Pik-1 (1143 aa).

Residues 1 to 190 (MEAAAMAVTA…PLRIMGGEMQ (190 aa)) form a structured coiled coil (CC) domain region. One can recognise an HMA domain in the interval 189-258 (MQKIVFKIPM…KVGHAELLQV (70 aa)). The tract at residues 191–264 (KIVFKIPMVD…LLQVSQVKED (74 aa)) is HMA-like domain. The NB-ARC domain occupies 282–570 (HEVKTICILG…WIAEGFVSEE (289 aa)). LRR repeat units lie at residues 681–706 (FKRL…ICEQ), 708–731 (SLRV…MRKL), 732–754 (KHLE…IGEL), 756–777 (HLRI…IREL), 778–800 (QHLH…VGKL), 802–823 (NLKI…IGEL), 824–848 (NHLQ…QISQ), 945–968 (MPNL…INGT), 979–1002 (DSRL…EFKF), and 1004–1027 (AGPA…VFRC).

This sequence belongs to the disease resistance NB-LRR family. In terms of assembly, interacts with AVR-Pik through its N-terminal part containing the HMA-like domain.

Functionally, disease resistance (R) protein that specifically recognizes the AVR-Pik effector avirulence protein from M.oryzae. Resistance proteins guard the plant against pathogens that contain an appropriate avirulence protein via an indirect interaction with this avirulence protein. That triggers a defense system including the hypersensitive response, which restricts the pathogen growth. Contribution of Pik-2 is required to recognize the effector avirulence protein AVR-Pik. The sequence is that of Disease resistance protein Pik-1 from Oryza sativa subsp. japonica (Rice).